The following is a 490-amino-acid chain: Patellin-3 (490 aa).

The segment covering 1 to 17 has biased composition (low complexity); that stretch reads MAEEPTTTTLVTPEKLP. The disordered stretch occupies residues 1–121; that stretch reads MAEEPTTTTL…ESSKLSDLSN (121 aa). Position 2 is an N-acetylalanine (alanine 2). A compositionally biased stretch (polar residues) spans 19–33; it reads PSLTPSEVSESTQDA. Positions 46 to 56 are enriched in low complexity; the sequence is ETNPPETADTT. Composition is skewed to basic and acidic residues over residues 57-69 and 79-100; these read TKPE…EHHP and STEK…EKKS. Position 108 is a phosphoserine (serine 108). Over residues 109–121 the composition is skewed to basic and acidic residues; that stretch reads FKEESSKLSDLSN. Lysine 193 is covalently cross-linked (Glycyl lysine isopeptide (Lys-Gly) (interchain with G-Cter in ubiquitin)). Positions 202–377 constitute a CRAL-TRIO domain; sequence EEDLVDDLDK…QYGGLSVDPC (176 aa). The 135-residue stretch at 353–487 folds into the GOLD domain; that stretch reads AETLFKYISP…KKKLVYRFNV (135 aa).

Belongs to the patellin family.

Its subcellular location is the membrane. The protein resides in the cytoplasm. Functionally, carrier protein that may be involved in membrane-trafficking events associated with cell plate formation during cytokinesis. Binds to some hydrophobic molecules such as phosphoinositides and promotes their transfer between the different cellular sites. This Arabidopsis thaliana (Mouse-ear cress) protein is Patellin-3 (PATL3).